Reading from the N-terminus, the 248-residue chain is Coproheme decarboxylase (248 aa).

Residues Arg130, Tyr144, 144–148 (YPMDK), Lys148, His171, Gln184, and Ser222 contribute to the Fe-coproporphyrin III site. Tyr144 is a catalytic residue.

This sequence belongs to the ChdC family. Type 1 subfamily. Homopentamer. It depends on Fe-coproporphyrin III as a cofactor.

It carries out the reaction Fe-coproporphyrin III + 2 H2O2 + 2 H(+) = heme b + 2 CO2 + 4 H2O. It catalyses the reaction Fe-coproporphyrin III + H2O2 + H(+) = harderoheme III + CO2 + 2 H2O. The catalysed reaction is harderoheme III + H2O2 + H(+) = heme b + CO2 + 2 H2O. It participates in porphyrin-containing compound metabolism; protoheme biosynthesis. Involved in coproporphyrin-dependent heme b biosynthesis. Catalyzes the decarboxylation of Fe-coproporphyrin III (coproheme) to heme b (protoheme IX), the last step of the pathway. The reaction occurs in a stepwise manner with a three-propionate harderoheme intermediate. This is Coproheme decarboxylase from Geobacillus stearothermophilus (strain DSM 13240 / CIP 106956 / 10).